The primary structure comprises 138 residues: MRHGYRGRRFNRTTEHRKAMFANMSAALIKHEQIVTTLPKAKDLRPVVEKLISLGRTDSIHARRLAMAQIRDADMVKKLFSVLGPRYQSRPGGYCRIMKAGFRYGDNAPMAVIEFVDRDVDARGKDSGPTSVETAEAA.

Belongs to the bacterial ribosomal protein bL17 family. In terms of assembly, part of the 50S ribosomal subunit. Contacts protein L32.

This chain is Large ribosomal subunit protein bL17, found in Methylorubrum extorquens (strain CM4 / NCIMB 13688) (Methylobacterium extorquens).